Here is a 123-residue protein sequence, read N- to C-terminus: Small ribosomal subunit protein uS12 (123 aa).

D89 carries the post-translational modification 3-methylthioaspartic acid.

The protein belongs to the universal ribosomal protein uS12 family. As to quaternary structure, part of the 30S ribosomal subunit. Contacts proteins S8 and S17. May interact with IF1 in the 30S initiation complex.

In terms of biological role, with S4 and S5 plays an important role in translational accuracy. Interacts with and stabilizes bases of the 16S rRNA that are involved in tRNA selection in the A site and with the mRNA backbone. Located at the interface of the 30S and 50S subunits, it traverses the body of the 30S subunit contacting proteins on the other side and probably holding the rRNA structure together. The combined cluster of proteins S8, S12 and S17 appears to hold together the shoulder and platform of the 30S subunit. This is Small ribosomal subunit protein uS12 from Rhodopseudomonas palustris (strain BisB18).